A 469-amino-acid polypeptide reads, in one-letter code: 1-aminocyclopropane-1-carboxylate synthase 3 (469 aa).

An N6-(pyridoxal phosphate)lysine modification is found at Lys272. The tract at residues 432-452 (APNATNHQNQQQSNANSKKKS) is disordered. Residues 437–447 (NHQNQQQSNAN) show a composition bias toward low complexity.

It belongs to the class-I pyridoxal-phosphate-dependent aminotransferase family. As to quaternary structure, homodimer. The cofactor is pyridoxal 5'-phosphate.

It carries out the reaction S-adenosyl-L-methionine = 1-aminocyclopropane-1-carboxylate + S-methyl-5'-thioadenosine + H(+). It participates in alkene biosynthesis; ethylene biosynthesis via S-adenosyl-L-methionine; ethylene from S-adenosyl-L-methionine: step 1/2. Catalyzes the formation of 1-aminocyclopropane-1-carboxylate, a direct precursor of ethylene in higher plants. This is 1-aminocyclopropane-1-carboxylate synthase 3 (ACS3) from Solanum lycopersicum (Tomato).